The chain runs to 398 residues: Probable transcription factor PosF21 (398 aa).

2 disordered regions span residues 1–46 and 112–150; these read MDKE…HDIS and ATSS…NSLG. The segment covering 7–19 has biased composition (pro residues); it reads PAPPCGGLPPPSP. Residues 125–148 show a composition bias toward polar residues; that stretch reads AWKNETMMQTGTGSTSNPQNTVNS. Residues 201 to 264 form the bZIP domain; it reads DPKRAKRIWA…NGLTVENNEL (64 aa). Residues 203–224 are basic motif; sequence KRAKRIWANRQSAARSKERKTR. Residues 229-264 are leucine-zipper; the sequence is LERKVQTLQTEATTLSAQLTLLQRDTNGLTVENNEL.

The protein belongs to the bZIP family.

The protein localises to the nucleus. Putative transcription factor with an activatory role. In Arabidopsis thaliana (Mouse-ear cress), this protein is Probable transcription factor PosF21 (POSF21).